The chain runs to 274 residues: NADPH-dependent 7-cyano-7-deazaguanine reductase (274 aa).

80–82 (VES) contributes to the substrate binding site. 82-83 (SK) lines the NADPH pocket. The active-site Thioimide intermediate is C181. D188 (proton donor) is an active-site residue. 220–221 (HE) serves as a coordination point for substrate. 249-250 (RG) serves as a coordination point for NADPH.

This sequence belongs to the GTP cyclohydrolase I family. QueF type 2 subfamily. As to quaternary structure, homodimer.

The protein resides in the cytoplasm. It carries out the reaction 7-aminomethyl-7-carbaguanine + 2 NADP(+) = 7-cyano-7-deazaguanine + 2 NADPH + 3 H(+). It participates in tRNA modification; tRNA-queuosine biosynthesis. Its function is as follows. Catalyzes the NADPH-dependent reduction of 7-cyano-7-deazaguanine (preQ0) to 7-aminomethyl-7-deazaguanine (preQ1). The sequence is that of NADPH-dependent 7-cyano-7-deazaguanine reductase from Burkholderia thailandensis (strain ATCC 700388 / DSM 13276 / CCUG 48851 / CIP 106301 / E264).